Reading from the N-terminus, the 383-residue chain is Retrovirus-related Pol polyprotein from type-1 retrotransposable element R1 3 (383 aa).

Residues 1-88 form the Reverse transcriptase domain; the sequence is VDAFADDLLL…DRVRYLGVNV (88 aa). Positions 229-383 are nucleic acid-binding endonuclease; sequence LSLHECRELV…VQRMRENEES (155 aa).

The enzyme catalyses DNA(n) + a 2'-deoxyribonucleoside 5'-triphosphate = DNA(n+1) + diphosphate. The polypeptide is Retrovirus-related Pol polyprotein from type-1 retrotransposable element R1 3 (Nasonia vitripennis (Parasitic wasp)).